Consider the following 230-residue polypeptide: Ribosome-recycling factor, mitochondrial (230 aa).

Residues Met-1 to Ser-24 constitute a mitochondrion transit peptide.

It belongs to the RRF family.

The protein resides in the mitochondrion. Necessary for protein synthesis in mitochondria. Functions as a ribosome recycling factor in mitochondria. The polypeptide is Ribosome-recycling factor, mitochondrial (RRF1) (Saccharomyces cerevisiae (strain ATCC 204508 / S288c) (Baker's yeast)).